A 571-amino-acid polypeptide reads, in one-letter code: uncharacterized protein (571 aa).

Disordered regions lie at residues 71 to 128, 142 to 258, and 298 to 336; these read TNHY…RVTA, NKND…PQNE, and LNRQ…TTKR. The segment covering 88 to 113 has biased composition (polar residues); sequence PNRSGVSSPVNDGASSPTQRGGTTPA. A compositionally biased stretch (pro residues) spans 168–184; it reads RGYPGPGPRGYPGPGPR. A compositionally biased stretch (low complexity) spans 205-215; it reads QGPRRYSCPGP. Positions 217–234 are enriched in gly residues; it reads GYPGPGSSGRPDPGGGLQ. Residues 311–326 are compositionally biased toward low complexity; it reads PEKQQTPPPEETQNAQ.

This is an uncharacterized protein from Drosophila melanogaster (Fruit fly).